Consider the following 152-residue polypeptide: Protein-export protein SecB (152 aa).

The protein belongs to the SecB family. As to quaternary structure, homotetramer, a dimer of dimers. One homotetramer interacts with 1 SecA dimer.

It localises to the cytoplasm. Its function is as follows. One of the proteins required for the normal export of preproteins out of the cell cytoplasm. It is a molecular chaperone that binds to a subset of precursor proteins, maintaining them in a translocation-competent state. It also specifically binds to its receptor SecA. The sequence is that of Protein-export protein SecB from Rickettsia massiliae (strain Mtu5).